Here is a 195-residue protein sequence, read N- to C-terminus: Molybdopterin synthase catalytic subunit (195 aa).

Residues 1–37 (MSARPEPQPGSERNATEPLPSHLDPTTYPRTLTTTHG) are disordered. The span at 25 to 37 (PTTYPRTLTTTHG) shows a compositional bias: low complexity. Residues 141–142 (HR), Lys157, and 164–166 (KRE) each bind substrate.

Belongs to the MoaE family. MOCS2B subfamily. As to quaternary structure, heterotetramer; composed of 2 small (MOCS2A) and 2 large (MOCS2B) subunits.

It localises to the cytoplasm. It carries out the reaction 2 [molybdopterin-synthase sulfur-carrier protein]-C-terminal-Gly-aminoethanethioate + cyclic pyranopterin phosphate + H2O = molybdopterin + 2 [molybdopterin-synthase sulfur-carrier protein]-C-terminal Gly-Gly + 2 H(+). It functions in the pathway cofactor biosynthesis; molybdopterin biosynthesis. In terms of biological role, catalytic subunit of the molybdopterin synthase complex, a complex that catalyzes the conversion of precursor Z into molybdopterin. Acts by mediating the incorporation of 2 sulfur atoms from thiocarboxylated MOCS2A into precursor Z to generate a dithiolene group. This chain is Molybdopterin synthase catalytic subunit, found in Emericella nidulans (strain FGSC A4 / ATCC 38163 / CBS 112.46 / NRRL 194 / M139) (Aspergillus nidulans).